We begin with the raw amino-acid sequence, 657 residues long: Endoplasmic reticulum chaperone BiP homolog (657 aa).

The signal sequence occupies residues 1-17 (MKVFSLILIAFVANAYC). ATP contacts are provided by residues 38 to 41 (GTTY), lysine 99, 229 to 231 (GGT), 295 to 302 (EKAKRALS), and 366 to 369 (GSTR). Residues 128 to 282 (KPNVEVKVGS…KKKSGKDLRK (155 aa)) form a nucleotide-binding (NBD) region. The substrate-binding (SBD) stretch occupies residues 402–502 (VQAGVIGGVE…PRGVPQIEVT (101 aa)). Residues 607 to 657 (LGSNQDASTEENKEQKKELESVVQPIVSKLYSAGGQGEQASEEPSEDHDEL) form a disordered region. The span at 616 to 626 (EENKEQKKELE) shows a compositional bias: basic and acidic residues. The span at 646 to 657 (ASEEPSEDHDEL) shows a compositional bias: acidic residues. Positions 654–657 (HDEL) match the Prevents secretion from ER motif.

The protein belongs to the heat shock protein 70 family.

Its subcellular location is the endoplasmic reticulum lumen. The catalysed reaction is ATP + H2O = ADP + phosphate + H(+). Its activity is regulated as follows. The chaperone activity is regulated by ATP-induced allosteric coupling of the nucleotide-binding (NBD) and substrate-binding (SBD) domains. In the ADP-bound and nucleotide-free (apo) states, the two domains have little interaction. In contrast, in the ATP-bound state the two domains are tightly coupled, which results in drastically accelerated kinetics in both binding and release of polypeptide substrates. J domain-containing co-chaperones stimulate the ATPase activity and are required for efficient substrate recognition. In terms of biological role, endoplasmic reticulum chaperone that plays a key role in protein folding and quality control in the endoplasmic reticulum lumen. Required for ER dynamics during the first embryonic cell divisions. Specifically, controls ER transition into sheet-like structures at the onset of mitosis, possibly by regulating homotypic membrane fusion. The polypeptide is Endoplasmic reticulum chaperone BiP homolog (hsp-4) (Caenorhabditis elegans).